The following is a 217-amino-acid chain: Large ribosomal subunit protein uL1 (217 aa).

This sequence belongs to the universal ribosomal protein uL1 family. In terms of assembly, part of the 50S ribosomal subunit.

In terms of biological role, binds directly to 23S rRNA. Probably involved in E site tRNA release. Protein L1 is also a translational repressor protein, it controls the translation of its operon by binding to its mRNA. The sequence is that of Large ribosomal subunit protein uL1 from Thermoplasma volcanium (strain ATCC 51530 / DSM 4299 / JCM 9571 / NBRC 15438 / GSS1).